The following is a 568-amino-acid chain: Putative ABC transporter ATP-binding protein CPE1583 (568 aa).

2 consecutive ABC transporter domains span residues 7–248 (IEFK…GIRE) and 303–536 (LEFK…ASLK). ATP contacts are provided by residues 41 to 48 (GPSGSGKS) and 336 to 343 (GKNGAGKS).

The protein belongs to the ABC transporter superfamily.

The protein localises to the cell membrane. Functionally, probably part of an ABC transporter complex. Responsible for energy coupling to the transport system. In Clostridium perfringens (strain 13 / Type A), this protein is Putative ABC transporter ATP-binding protein CPE1583.